Here is a 198-residue protein sequence, read N- to C-terminus: Molybdenum cofactor guanylyltransferase (198 aa).

Residues 14–16 (LAG), K27, D73, and D103 each bind GTP. D103 provides a ligand contact to Mg(2+).

It belongs to the MobA family. Monomer. The cofactor is Mg(2+).

The protein localises to the cytoplasm. It carries out the reaction Mo-molybdopterin + GTP + H(+) = Mo-molybdopterin guanine dinucleotide + diphosphate. Its function is as follows. Transfers a GMP moiety from GTP to Mo-molybdopterin (Mo-MPT) cofactor (Moco or molybdenum cofactor) to form Mo-molybdopterin guanine dinucleotide (Mo-MGD) cofactor. The polypeptide is Molybdenum cofactor guanylyltransferase (Pseudomonas aeruginosa (strain LESB58)).